Here is a 485-residue protein sequence, read N- to C-terminus: tRNA sulfurtransferase (485 aa).

In terms of domain architecture, THUMP spans 61 to 165 (EELIALLQRI…DDKMMLVKTR (105 aa)). ATP is bound by residues 183-184 (LI), lysine 265, glycine 287, and glutamine 296. A disulfide bridge links cysteine 344 with cysteine 456. The Rhodanese domain occupies 404 to 483 (LGENEVILDI…FSNVRVFAKN (80 aa)). The Cysteine persulfide intermediate role is filled by cysteine 456.

It belongs to the ThiI family.

The protein localises to the cytoplasm. The enzyme catalyses [ThiI sulfur-carrier protein]-S-sulfanyl-L-cysteine + a uridine in tRNA + 2 reduced [2Fe-2S]-[ferredoxin] + ATP + H(+) = [ThiI sulfur-carrier protein]-L-cysteine + a 4-thiouridine in tRNA + 2 oxidized [2Fe-2S]-[ferredoxin] + AMP + diphosphate. It carries out the reaction [ThiS sulfur-carrier protein]-C-terminal Gly-Gly-AMP + S-sulfanyl-L-cysteinyl-[cysteine desulfurase] + AH2 = [ThiS sulfur-carrier protein]-C-terminal-Gly-aminoethanethioate + L-cysteinyl-[cysteine desulfurase] + A + AMP + 2 H(+). It participates in cofactor biosynthesis; thiamine diphosphate biosynthesis. Its function is as follows. Catalyzes the ATP-dependent transfer of a sulfur to tRNA to produce 4-thiouridine in position 8 of tRNAs, which functions as a near-UV photosensor. Also catalyzes the transfer of sulfur to the sulfur carrier protein ThiS, forming ThiS-thiocarboxylate. This is a step in the synthesis of thiazole, in the thiamine biosynthesis pathway. The sulfur is donated as persulfide by IscS. The sequence is that of tRNA sulfurtransferase from Haemophilus influenzae (strain 86-028NP).